We begin with the raw amino-acid sequence, 179 residues long: Protein GrpE (179 aa).

A compositionally biased stretch (basic and acidic residues) spans 1 to 14 (MSKKDKKEEIKEEV). The segment at 1–40 (MSKKDKKEEIKEEVEATEPTTEESVEEVAEETSENKELQE) is disordered. A compositionally biased stretch (acidic residues) spans 15–32 (EATEPTTEESVEEVAEET).

This sequence belongs to the GrpE family. As to quaternary structure, homodimer.

The protein localises to the cytoplasm. Its function is as follows. Participates actively in the response to hyperosmotic and heat shock by preventing the aggregation of stress-denatured proteins, in association with DnaK and GrpE. It is the nucleotide exchange factor for DnaK and may function as a thermosensor. Unfolded proteins bind initially to DnaJ; upon interaction with the DnaJ-bound protein, DnaK hydrolyzes its bound ATP, resulting in the formation of a stable complex. GrpE releases ADP from DnaK; ATP binding to DnaK triggers the release of the substrate protein, thus completing the reaction cycle. Several rounds of ATP-dependent interactions between DnaJ, DnaK and GrpE are required for fully efficient folding. This is Protein GrpE from Streptococcus mutans serotype c (strain ATCC 700610 / UA159).